A 220-amino-acid polypeptide reads, in one-letter code: Phosphoenolpyruvate guanylyltransferase (220 aa).

The phosphoenolpyruvate site is built by Thr-154, Gly-169, and Ser-172.

This sequence belongs to the CofC family.

It carries out the reaction phosphoenolpyruvate + GTP + H(+) = enolpyruvoyl-2-diphospho-5'-guanosine + diphosphate. It participates in cofactor biosynthesis; coenzyme F420 biosynthesis. Functionally, guanylyltransferase that catalyzes the activation of phosphoenolpyruvate (PEP) as enolpyruvoyl-2-diphospho-5'-guanosine, via the condensation of PEP with GTP. It is involved in the biosynthesis of coenzyme F420, a hydride carrier cofactor. The protein is Phosphoenolpyruvate guanylyltransferase of Mycolicibacterium paratuberculosis (strain ATCC BAA-968 / K-10) (Mycobacterium paratuberculosis).